Here is a 125-residue protein sequence, read N- to C-terminus: Large ribosomal subunit protein bL12 (125 aa).

The protein belongs to the bacterial ribosomal protein bL12 family. In terms of assembly, homodimer. Part of the ribosomal stalk of the 50S ribosomal subunit. Forms a multimeric L10(L12)X complex, where L10 forms an elongated spine to which 2 to 4 L12 dimers bind in a sequential fashion. Binds GTP-bound translation factors.

Functionally, forms part of the ribosomal stalk which helps the ribosome interact with GTP-bound translation factors. Is thus essential for accurate translation. The protein is Large ribosomal subunit protein bL12 of Delftia acidovorans (strain DSM 14801 / SPH-1).